A 163-amino-acid polypeptide reads, in one-letter code: 2,3-dimethylmalate dehydratase small subunit (163 aa).

This sequence belongs to the LeuD family. LeuD type 2 subfamily. As to quaternary structure, heterodimer of a large and a small subunit.

It catalyses the reaction (2R,3S)-2,3-dimethylmalate = dimethylmaleate + H2O. It participates in cofactor degradation; nicotinate degradation; propanoate and pyruvate from 6-hydroxynicotinate: step 7/8. The sequence is that of 2,3-dimethylmalate dehydratase small subunit from Eubacterium barkeri (Clostridium barkeri).